Here is a 477-residue protein sequence, read N- to C-terminus: Glycogen synthase (477 aa).

Position 15 (lysine 15) interacts with ADP-alpha-D-glucose.

This sequence belongs to the glycosyltransferase 1 family. Bacterial/plant glycogen synthase subfamily.

It carries out the reaction [(1-&gt;4)-alpha-D-glucosyl](n) + ADP-alpha-D-glucose = [(1-&gt;4)-alpha-D-glucosyl](n+1) + ADP + H(+). It functions in the pathway glycan biosynthesis; glycogen biosynthesis. In terms of biological role, synthesizes alpha-1,4-glucan chains using ADP-glucose. This is Glycogen synthase from Streptococcus pneumoniae serotype 19F (strain G54).